A 291-amino-acid polypeptide reads, in one-letter code: 2-C-methyl-D-erythritol 4-phosphate cytidylyltransferase (291 aa).

A disordered region spans residues 1–23 (MTERDFDTPVETPTVQPAPAQGA).

The protein belongs to the IspD/TarI cytidylyltransferase family. IspD subfamily.

The catalysed reaction is 2-C-methyl-D-erythritol 4-phosphate + CTP + H(+) = 4-CDP-2-C-methyl-D-erythritol + diphosphate. It functions in the pathway isoprenoid biosynthesis; isopentenyl diphosphate biosynthesis via DXP pathway; isopentenyl diphosphate from 1-deoxy-D-xylulose 5-phosphate: step 2/6. Functionally, catalyzes the formation of 4-diphosphocytidyl-2-C-methyl-D-erythritol from CTP and 2-C-methyl-D-erythritol 4-phosphate (MEP). This is 2-C-methyl-D-erythritol 4-phosphate cytidylyltransferase from Bifidobacterium longum (strain DJO10A).